The primary structure comprises 468 residues: UDP-N-acetylmuramoyl-L-alanine--L-glutamate ligase (468 aa).

122-128 is a binding site for ATP; sequence GTKGKST.

The protein belongs to the MurCDEF family. MurD2 subfamily.

The protein resides in the cytoplasm. It catalyses the reaction UDP-N-acetyl-alpha-D-muramoyl-L-alanine + L-glutamate + ATP = UDP-N-acetyl-alpha-D-muramoyl-L-alanyl-L-glutamate + ADP + phosphate + H(+). It functions in the pathway cell wall biogenesis; peptidoglycan biosynthesis. In terms of biological role, cell wall formation. Catalyzes the addition of L-glutamate to the nucleotide precursor UDP-N-acetylmuramoyl-L-alanine. This is UDP-N-acetylmuramoyl-L-alanine--L-glutamate ligase from Xylella fastidiosa (strain Temecula1 / ATCC 700964).